The chain runs to 146 residues: VHLTGEEKSAVTALWGKVNVDEVGGEALGRLLVVYPWTQRFFESFGDLSTPDAVMNNPKVKAHGKKVLGAFSDGLTHLDNLKGTFAHLSELHCDKLHVDPENFRLLGNVLVCVLAHHFGKEFTPVVQAAYQKVVAGVANALAHKYH.

Residue Val1 is modified to N-acetylvaline. One can recognise a Globin domain in the interval 2-146; it reads HLTGEEKSAV…VANALAHKYH (145 aa). Phosphothreonine is present on Thr12. Ser44 is subject to Phosphoserine. Lys59 carries the N6-acetyllysine modification. Position 63 (His63) interacts with heme b. Residue Lys82 is modified to N6-acetyllysine. His92 provides a ligand contact to heme b. An S-nitrosocysteine modification is found at Cys93. An N6-acetyllysine modification is found at Lys144.

This sequence belongs to the globin family. As to quaternary structure, heterotetramer of two alpha chains and two beta chains. As to expression, red blood cells.

Its function is as follows. Involved in oxygen transport from the lung to the various peripheral tissues. The chain is Hemoglobin subunit beta (HBB) from Mico argentatus (Silvery marmoset).